Reading from the N-terminus, the 402-residue chain is Cholinephosphotransferase 1 (402 aa).

Residues 1-62 (MGLAEGLAAR…LVEKVPLWLA (62 aa)) lie on the Cytoplasmic side of the membrane. Residues 63-83 (PNTITMVGLLLNVLSTLILVC) form a helical membrane-spanning segment. Asparagine 64 provides a ligand contact to CDP-choline. Topologically, residues 84-93 (YCPTATEGAP) are lumenal. A helical transmembrane segment spans residues 94 to 118 (FWTYLLCAIGLFVYQSLDAIDGKQA). Residues aspartate 111 and aspartate 114 each coordinate Mg(2+). A CDP-choline-binding site is contributed by arginine 119. At 119–125 (RRTNSSS) the chain is on the cytoplasmic side. A helical transmembrane segment spans residues 126–150 (PLGEMFDHGCDSISIVFVNLGTIAA). Aspartate 132 provides a ligand contact to Mg(2+). Catalysis depends on histidine 133, which acts as the Proton acceptor. Aspartate 136 contacts Mg(2+). Topologically, residues 151–160 (VRLGTLPGWM) are lumenal. A helical membrane pass occupies residues 161–179 (FYCCFVGMFMFYCAQWQTY). At 180 to 190 (VCGTLKFGIID) the chain is on the cytoplasmic side. The helical transmembrane segment at 191-207 (VTELQISVTVMFLMTAV) threads the bilayer. At 208 to 222 (CGPELWDYEIPFTGL) the chain is on the lumenal side. The helical transmembrane segment at 223–248 (PMKTIPLLGIIGGTVYSCSNYFRVIL) threads the bilayer. The Cytoplasmic segment spans residues 249–265 (SGGVGKNGSTVAGTSVL). The chain crosses the membrane as a helical span at residues 266 to 281 (SPGLHIGLVLLLALMI). Residues 282–293 (YKKSTTNLFLQN) lie on the Lumenal side of the membrane. Residues 294-316 (PCLYTLAFGFVSAKITIKLVIAH) form a helical membrane-spanning segment. Over 317–329 (MTKSEISLQDTAF) the chain is Cytoplasmic. Residues 330–339 (IGPGLLFFNQ) traverse the membrane as a helical segment. Residues 340–346 (YFNSFID) lie on the Lumenal side of the membrane. Residues 347–376 (EYIVLWIAMVISFADLLRYCISVCLQIATH) form a helical membrane-spanning segment. Residues 377-402 (LRISVFRISSNQAAEQVQTQKQKLTD) lie on the Cytoplasmic side of the membrane.

It belongs to the CDP-alcohol phosphatidyltransferase class-I family. In terms of assembly, homodimer. Mg(2+) serves as cofactor. Mn(2+) is required as a cofactor.

The protein resides in the golgi apparatus membrane. It carries out the reaction CDP-choline + a 1,2-diacyl-sn-glycerol = a 1,2-diacyl-sn-glycero-3-phosphocholine + CMP + H(+). It catalyses the reaction 1,2-dioctanoyl-sn-glycerol + CDP-choline = 1,2-dioctanoyl-sn-glycero-3-phosphocholine + CMP + H(+). The enzyme catalyses 1-octadecanoyl-2-(5Z,8Z,11Z,14Z-eicosatetraenoyl)-sn-glycerol + CDP-choline = 1-octadecanoyl-2-(5Z,8Z,11Z,14Z-eicosatetraenoyl)-sn-glycero-3-phosphocholine + CMP + H(+). The catalysed reaction is 1-hexadecanoyl-2-(9Z-octadecenoyl)-sn-glycerol + CDP-choline = 1-hexadecanoyl-2-(9Z-octadecenoyl)-sn-glycero-3-phosphocholine + CMP + H(+). It carries out the reaction 1-hexadecanoyl-2-(4Z,7Z,10Z,13Z,16Z,19Z-docosahexaenoyl)-sn-glycerol + CDP-choline = 1-hexadecanoyl-2-(4Z,7Z,10Z,13Z,16Z,19Z-docosahexaenoyl)-sn-glycero-3-phosphocholine + CMP + H(+). Its pathway is phospholipid metabolism; phosphatidylcholine biosynthesis; phosphatidylcholine from phosphocholine: step 2/2. In terms of biological role, catalyzes the final step of de novo phosphatidylcholine (PC) synthesis, i.e. the transfer of choline phosphate from CDP-choline to the free hydroxyl of a diacylglycerol (DAG), producing a PC. It thereby plays a central role in the formation and maintenance of vesicular membranes. Shows a high preference for CDP-choline over CDP-ethanolamine as substrate. This chain is Cholinephosphotransferase 1 (chpt1), found in Xenopus laevis (African clawed frog).